Consider the following 160-residue polypeptide: S-ribosylhomocysteine lyase (160 aa).

3 residues coordinate Fe cation: H57, H61, and C127.

This sequence belongs to the LuxS family. In terms of assembly, homodimer. It depends on Fe cation as a cofactor.

It carries out the reaction S-(5-deoxy-D-ribos-5-yl)-L-homocysteine = (S)-4,5-dihydroxypentane-2,3-dione + L-homocysteine. In terms of biological role, involved in the synthesis of autoinducer 2 (AI-2) which is secreted by bacteria and is used to communicate both the cell density and the metabolic potential of the environment. The regulation of gene expression in response to changes in cell density is called quorum sensing. Catalyzes the transformation of S-ribosylhomocysteine (RHC) to homocysteine (HC) and 4,5-dihydroxy-2,3-pentadione (DPD). In Streptococcus sanguinis (strain SK36), this protein is S-ribosylhomocysteine lyase.